The sequence spans 507 residues: Transcription factor NIGTH1 (507 aa).

Disordered stretches follow at residues Ala139–Asp172 and Ser238–Arg268. Residues Pro152–Leu161 show a composition bias toward basic and acidic residues. Residues Pro263–Arg323 enclose the HTH myb-type domain. The segment at residues Pro294 to Arg319 is a DNA-binding region (H-T-H motif). Residues Ala402–Tyr507 are disordered. Over residues Gln412–Asp433 the composition is skewed to low complexity. The span at Arg437–Ala446 shows a compositional bias: gly residues. The span at Glu456–Met476 shows a compositional bias: acidic residues.

As to quaternary structure, interacts with ACA5.

It is found in the nucleus. Its function is as follows. Probable transcription factor that may play a role in regulatory networks controlling development and metabolism. This Oryza sativa subsp. japonica (Rice) protein is Transcription factor NIGTH1.